Consider the following 889-residue polypeptide: Phosphofurin acidic cluster sorting protein 2 (889 aa).

Disordered regions lie at residues 180 to 246 (DHED…TSMT), 293 to 463 (LDME…PDAR), and 687 to 740 (SSAT…SQGV). The segment covering 343-358 (SHKEPPSPADVPEKTR) has biased composition (basic and acidic residues). Residues S390, S416, S453, S691, and S694 each carry the phosphoserine modification. Low complexity-rich tracts occupy residues 687-720 (SSATSGDSDDAAPSGSGTLSSTPPSASPAAKEAS) and 727-737 (PSVSGGLSSPS).

The protein belongs to the PACS family. Interacts with BID and PKD2. Interacts with SIRT1. Interacts with HDAC1. Interacts with TRPV1. Interacts with WDR37. In terms of assembly, (Microbial infection) Interacts with HIV-1 Nef. As to expression, broadly expressed, with greatest levels in skeletal muscle followed by heart, brain, pancreas and testis.

The protein resides in the endoplasmic reticulum. It is found in the mitochondrion. Functionally, multifunctional sorting protein that controls the endoplasmic reticulum (ER)-mitochondria communication, including the apposition of mitochondria with the ER and ER homeostasis. In addition, in response to apoptotic inducer, translocates BIB to mitochondria, which initiates a sequence of events including the formation of mitochondrial truncated BID, the release of cytochrome c, the activation of caspase-3 thereby causing cell death. May also be involved in ion channel trafficking, directing acidic cluster-containing ion channels to distinct subcellular compartments. The chain is Phosphofurin acidic cluster sorting protein 2 from Homo sapiens (Human).